We begin with the raw amino-acid sequence, 273 residues long: Hydroxyethylthiazole kinase (273 aa).

Met-49 is a substrate binding site. 2 residues coordinate ATP: Arg-125 and Thr-171. Gly-198 is a substrate binding site.

The protein belongs to the Thz kinase family. Mg(2+) serves as cofactor.

It carries out the reaction 5-(2-hydroxyethyl)-4-methylthiazole + ATP = 4-methyl-5-(2-phosphooxyethyl)-thiazole + ADP + H(+). The protein operates within cofactor biosynthesis; thiamine diphosphate biosynthesis; 4-methyl-5-(2-phosphoethyl)-thiazole from 5-(2-hydroxyethyl)-4-methylthiazole: step 1/1. Its function is as follows. Catalyzes the phosphorylation of the hydroxyl group of 4-methyl-5-beta-hydroxyethylthiazole (THZ). In Desulforudis audaxviator (strain MP104C), this protein is Hydroxyethylthiazole kinase.